A 90-amino-acid polypeptide reads, in one-letter code: Small ribosomal subunit protein bS16 (90 aa).

The protein belongs to the bacterial ribosomal protein bS16 family.

In Streptococcus pyogenes serotype M4 (strain MGAS10750), this protein is Small ribosomal subunit protein bS16.